A 287-amino-acid chain; its full sequence is Pyridoxal kinase PdxY (287 aa).

Residues S10 and 45–46 (TQ) each bind substrate. ATP contacts are provided by residues D112, A144, E149, K182, and 209-212 (RPLV). Position 224 (D224) interacts with substrate.

This sequence belongs to the pyridoxine kinase family. PdxY subfamily. As to quaternary structure, homodimer. It depends on Mg(2+) as a cofactor.

The catalysed reaction is pyridoxal + ATP = pyridoxal 5'-phosphate + ADP + H(+). The protein operates within cofactor metabolism; pyridoxal 5'-phosphate salvage; pyridoxal 5'-phosphate from pyridoxal: step 1/1. In terms of biological role, pyridoxal kinase involved in the salvage pathway of pyridoxal 5'-phosphate (PLP). Catalyzes the phosphorylation of pyridoxal to PLP. The protein is Pyridoxal kinase PdxY of Shigella flexneri.